A 391-amino-acid polypeptide reads, in one-letter code: UDP-N-acetylglucosamine--N-acetylmuramyl-(pentapeptide) pyrophosphoryl-undecaprenol N-acetylglucosamine transferase (391 aa).

UDP-N-acetyl-alpha-D-glucosamine is bound by residues 11-13 (TGG), Arg-176, Ser-206, and Gln-312.

The protein belongs to the glycosyltransferase 28 family. MurG subfamily.

The protein localises to the cell inner membrane. It catalyses the reaction di-trans,octa-cis-undecaprenyl diphospho-N-acetyl-alpha-D-muramoyl-L-alanyl-D-glutamyl-meso-2,6-diaminopimeloyl-D-alanyl-D-alanine + UDP-N-acetyl-alpha-D-glucosamine = di-trans,octa-cis-undecaprenyl diphospho-[N-acetyl-alpha-D-glucosaminyl-(1-&gt;4)]-N-acetyl-alpha-D-muramoyl-L-alanyl-D-glutamyl-meso-2,6-diaminopimeloyl-D-alanyl-D-alanine + UDP + H(+). It functions in the pathway cell wall biogenesis; peptidoglycan biosynthesis. Cell wall formation. Catalyzes the transfer of a GlcNAc subunit on undecaprenyl-pyrophosphoryl-MurNAc-pentapeptide (lipid intermediate I) to form undecaprenyl-pyrophosphoryl-MurNAc-(pentapeptide)GlcNAc (lipid intermediate II). The chain is UDP-N-acetylglucosamine--N-acetylmuramyl-(pentapeptide) pyrophosphoryl-undecaprenol N-acetylglucosamine transferase from Treponema denticola (strain ATCC 35405 / DSM 14222 / CIP 103919 / JCM 8153 / KCTC 15104).